The primary structure comprises 270 residues: MLLGSVPQLDRVAVQLGPFPVYWYGIIIGTGVLLGLWLATREGERLGIPKDTFVDLVLIAVPIAILFARMYYVIFEWEYYVQNPSQIINIRQGGLAIHGGLIGAVITGILFAKRRGVSFWKLADIAAPSILLGQAIGRWGNFMNQEAHGDEVTRQFLEGLHLPDFIINQMYIDGVYYHPTFLYESLWNFAGVILLLALRKVNLRRGELFFTYLIWYSIGRFFVEGLRTDSLMLGPLRIAQVMSIGLVVISIIFIIVRRKMGQADKRYSEN.

The next 4 membrane-spanning stretches (helical) occupy residues Phe19–Ala39, Leu56–Glu76, Gln92–Ala112, and Gly116–Ile136. A 1,2-diacyl-sn-glycero-3-phospho-(1'-sn-glycerol) is bound at residue Arg138. A run of 3 helical transmembrane segments spans residues His178–Leu198, Gly206–Leu226, and Leu236–Val256.

The protein belongs to the Lgt family.

It localises to the cell membrane. It carries out the reaction L-cysteinyl-[prolipoprotein] + a 1,2-diacyl-sn-glycero-3-phospho-(1'-sn-glycerol) = an S-1,2-diacyl-sn-glyceryl-L-cysteinyl-[prolipoprotein] + sn-glycerol 1-phosphate + H(+). It functions in the pathway protein modification; lipoprotein biosynthesis (diacylglyceryl transfer). Catalyzes the transfer of the diacylglyceryl group from phosphatidylglycerol to the sulfhydryl group of the N-terminal cysteine of a prolipoprotein, the first step in the formation of mature lipoproteins. This chain is Phosphatidylglycerol--prolipoprotein diacylglyceryl transferase, found in Bacillus thuringiensis subsp. konkukian (strain 97-27).